The following is a 400-amino-acid chain: Outer membrane protein alpha (400 aa).

The N-terminal stretch at M1–A20 is a signal peptide. The region spanning F21–G81 is the SLH domain. Residues D85–L379 adopt a coiled-coil conformation. 3 tandem repeats follow at residues V208–K232, V251–K275, and V326–K350. Residues V208 to K350 form a 3 X 25 AA approximate repeat region. The chain crosses the membrane as a helical span at residues S380–K400.

In terms of assembly, homotetramer.

Its subcellular location is the cell outer membrane. Its function is as follows. Links the outer membrane to the inner membrane. Long fibrous protein that could serve to separate the two membranes. The chain is Outer membrane protein alpha (omp-alpha) from Thermotoga maritima (strain ATCC 43589 / DSM 3109 / JCM 10099 / NBRC 100826 / MSB8).